A 1722-amino-acid polypeptide reads, in one-letter code: MDDDDAKLKAEIEAELDKLSISSLEKEDIESDAKSETQSDDSDTDSVELPESVLHCINIIKNRSKAVEELILQDLEDTDILSCSYGAVSNNHMHLRTGLSTEYEESSEQLIKILSEIEKEEFMRSKTDCATPDFVPEPSPHDLPMDEHVLPDDADINFGYCEVEEKCRQSFEAWQEKQKELEDKEKQTLKAQRDREEKQFQEEEEKRHCWMKQFKVEKKKLENIQKQEQDKMNDELYKEEKIWKEKFKQHEEYIRNLHLQMEEERTRFKDQQEKEKNSLLKQQNNAAVKIQAKYKAFVAYQKYGPIIKEQIESKKRKAQEWKEKEAKIRQKEEENRKRLEEEQRIKEERKKQKEEERKRREKEYEEKKNIVKQEREQLISKEKIILREDASQQLIISSALKKSGYNNKHLSLEDISNDKGDIAKNLVDENSKKQEDVLLWLVEESNMKENVDRQTILKESIQVKLKESISSQTILADFKMEEKNENLAKKRCSEELVKQERKYENTDNKTELGNSDLKGNLKEQFPLQELKSDAQKEEKIMKHVINENTGQKTQIILGHNQEISEVKTNEEQKIIKDNQQKKIQKVEKEEIQEQNGLLYKDKDTLVISVKQRSLSLTSENSKDVRENVILQEKEIYSKSKEIEENPKDNAWNSGIVIFNTTDTMINIEGKRNDQDYVLGRHAPCEGLSNYNAESSMVSKEVNSLKSEIRNISEKCHENAPEPDSMTCCVSESTLLYSIEERRLAWIKSFKPWLEIFKQNQQKKIVRRKRPVKCPANMTPALDKLEILRCGPWDTLQQVTTVTFQDLPGCVLSTLAECTNLQFLSLRRCGLTSLHSLSNCKKLKYIDAQENHIEAIECENLENLCVVLLNKNQLTSLHGLDGCTNIQCLELSYNKITRIGYSFFLEEKLVDNAGFCHHLGTSTSYLSLAQVWIPTGLCWSWIPITSLTKNSDCNFLISHLYWNCGLESLKNLQQLILDHNQLINTKGLCDTPTIVYLDCSHNHLTDVEGVENCGLLQILKLQGNYLSELPSLENLVLLRELHLDDNSISTVEAFSSYWLPLLQNITISQNSLTKIVPLFHFVSLEKLDVSHNCLSDLKSAIKWFDACYSLHELSLTGNPLLQETNWRDSLLKVLPALRILNGNILNSNSESRTEEHNQLGSAGFLALCQSQIREFNLLIENYITGKGDVFTLDTAENLCHYFKKLMILSTEYRHAHERGDVTITKKDESEAQKNHLAPTNSDSTLQNGVFYSCAREGEPDSPDIPEKWMDSVSSHSPLSKSATCENMEGRHQEILVCQKREDSKASSIPTIRIPFKEVVMTNSLLRNHQNIEPSEKIMAAVVIQSYWRGYLMRRQTHFSTRLHTAATEGLPNSSIKNQTILKKGKRENIVNIRKQREKAAILIQAVWKGFILRKKLTTALEAIKNEESDEEYREIDLEDFIFDEAALEEEWLALDSTRFPSQTLLLSNQLHWPKIPGNLKWDDTSFNLPSNPAQAWLCNDKENLSSSEHTQFNSRSENKTSSWTPESKTSRKSLLKSEKEKKISEEWGFKDISTAQQMLKRAQKMKSKKLKKKIDSTVRLALFKNNENKVSLPKSPKMVQPRRDGYFEGIEEDPIHKDTTANEKLERNREYTYQWLHTQVGVHETTSSRNMKCNHFLPELDPDVLNGGRVQLVARLVSREDTDLDLFSMTNGSALSVNREKKNQAHRHSAGSSSKLWFPSKLI.

Disordered stretches follow at residues 23–47, 182–202, 265–285, and 319–367; these read SLEKEDIESDAKSETQSDDSDTDSV, EDKEKQTLKAQRDREEKQFQE, RTRFKDQQEKEKNSLLKQQNN, and QEWK…YEEK. Residues 38–47 are compositionally biased toward acidic residues; sequence QSDDSDTDSV. The span at 265–278 shows a compositional bias: basic and acidic residues; the sequence is RTRFKDQQEKEKNS. The IQ 1 domain occupies 283–312; the sequence is QNNAAVKIQAKYKAFVAYQKYGPIIKEQIE. 10 LRR repeats span residues 819–840, 841–861, 862–883, 884–905, 970–991, 992–1013, 1014–1035, 1036–1057, 1060–1081, and 1082–1103; these read NLQFLSLRRCGLTSLHSLSNCK, KLKYIDAQENHIEAIECENLE, NLCVVLLNKNQLTSLHGLDGCT, NIQCLELSYNKITRIGYSFFLE, NLQQLILDHNQLINTKGLCDTP, TIVYLDCSHNHLTDVEGVENCG, LLQILKLQGNYLSELPSLENLV, LLRELHLDDNSISTVEAFSSYW, LLQNITISQNSLTKIVPLFHFV, and SLEKLDVSHNCLSDLKSAIKWF. Residues 1117–1157 enclose the LRRCT domain; it reads NPLLQETNWRDSLLKVLPALRILNGNILNSNSESRTEEHNQ. IQ domains lie at 1335–1364 and 1395–1424; these read KIMAAVVIQSYWRGYLMRRQTHFSTRLHTA and REKAAILIQAVWKGFILRKKLTTALEAIKN. A compositionally biased stretch (polar residues) spans 1506-1524; sequence SEHTQFNSRSENKTSSWTP. Positions 1506–1534 are disordered; the sequence is SEHTQFNSRSENKTSSWTPESKTSRKSLL.

The protein is Leucine-rich repeat- and IQ domain-containing protein 1 (LRRIQ1) of Homo sapiens (Human).